The primary structure comprises 468 residues: Mitochondrial adenyl nucleotide antiporter SLC25A23 (468 aa).

The tract at residues 1–149 is regulatory N-terminal domain; the sequence is MRGSPGDAER…DHFLLHSLEN (149 aa). At 1–188 the chain is on the mitochondrial intermembrane side; the sequence is MRGSPGDAER…EKLTGMWWKQ (188 aa). One can recognise an EF-hand 1 domain in the interval 9–44; it reads ERRQRWGRLFEELDSNKDGRVDVHELRQGLARLGGG. Ca(2+)-binding residues include Asp22, Asn24, Asp26, Arg28, and Glu33. Residues 34-67 are disordered; that stretch reads LRQGLARLGGGNPDPGAQQGISSEGDADPDGGLD. The span at 58-67 shows a compositional bias: acidic residues; it reads GDADPDGGLD. EF-hand domains are found at residues 77–112 and 113–148; these read EREQRLLLMFHSLDRNQDGHIDVSEIQQSFRALGIS and ISLEQAEKILHSMDRDGTMTIDWQEWRDHFLLHSLE. Ca(2+) contacts are provided by Asp90, Asn92, Asp94, His96, and Glu101. Positions 150 to 159 are linker region; sequence VEDVLYFWKH. Residues 165-468 form a C-terminal transmembrane transporter domain region; sequence IGECLTVPDE…MKQALGVTSR (304 aa). Solcar repeat units lie at residues 183-269, 277-362, and 374-462; these read GMWW…IKRA, LHVQ…LKNW, and PGIL…MKQA. Residues 189–206 traverse the membrane as a helical segment; that stretch reads LVAGAVAGAVSRTGTAPL. Residues 207-243 lie on the Mitochondrial matrix side of the membrane; it reads DRLKVFMQVHASKTNRLNILGGLRSMVLEGGIRSLWR. Residues 244 to 263 traverse the membrane as a helical segment; it reads GNGINVLKIAPESAIKFMAY. Residues 264 to 286 lie on the Mitochondrial intermembrane side of the membrane; it reads EQIKRAILGQQETLHVQERFVAG. A helical membrane pass occupies residues 287 to 300; sequence SLAGATAQTIIYPM. Over 301–336 the chain is Mitochondrial matrix; that stretch reads EVLKTRLTLRRTGQYKGLLDCARRILEREGPRAFYR. Residues 337–356 form a helical membrane-spanning segment; the sequence is GYLPNVLGIIPYAGIDLAVY. Topologically, residues 357–379 are mitochondrial intermembrane; the sequence is ETLKNWWLQQYSHDSADPGILVL. A helical transmembrane segment spans residues 380 to 397; the sequence is LACGTISSTCGQIASYPL. Over 398–436 the chain is Mitochondrial matrix; the sequence is ALVRTRMQAQASIEGGPQLSMLGLLRHILSQEGMRGLYR. A helical membrane pass occupies residues 437–456; the sequence is GIAPNFMKVIPAVSISYVVY. Residues 457-468 lie on the Mitochondrial intermembrane side of the membrane; that stretch reads ENMKQALGVTSR.

It belongs to the mitochondrial carrier (TC 2.A.29) family. In terms of assembly, interacts with MCU. Interacts with MICU1. Expressed at low levels in most tissues examined, with highest expression in brain, skeletal muscle and pancreas.

It is found in the mitochondrion inner membrane. The enzyme catalyses Mg(2+)(out) + phosphate(in) + ATP(out) = Mg(2+)(in) + phosphate(out) + ATP(in). It catalyses the reaction ADP(out) + phosphate(in) + H(+)(out) = ADP(in) + phosphate(out) + H(+)(in). It carries out the reaction AMP(out) + phosphate(in) = AMP(in) + phosphate(out). The catalysed reaction is phosphate(in) + ATP(out) + 2 H(+)(out) = phosphate(out) + ATP(in) + 2 H(+)(in). The enzyme catalyses dADP(in) + ADP(out) = dADP(out) + ADP(in). It catalyses the reaction Mg(2+)(in) + ADP(out) + ATP(in) + H(+)(out) = Mg(2+)(out) + ADP(in) + ATP(out) + H(+)(in). It carries out the reaction ADP(out) + diphosphate(in) = ADP(in) + diphosphate(out). The catalysed reaction is dAMP(in) + ADP(out) + H(+)(out) = dAMP(out) + ADP(in) + H(+)(in). The enzyme catalyses 3'-AMP(in) + ADP(out) + H(+)(out) = 3'-AMP(out) + ADP(in) + H(+)(in). It catalyses the reaction dAMP(out) + phosphate(in) = dAMP(in) + phosphate(out). It carries out the reaction 3'-AMP(out) + phosphate(in) = 3'-AMP(in) + phosphate(out). The catalysed reaction is dADP(out) + phosphate(in) + H(+)(out) = dADP(in) + phosphate(out) + H(+)(in). With respect to regulation, activated by an increase in cytosolic calcium levels that induce a conformational change of the N-terminal regulatory domain, uncapping the channel and allowing transport. Inhibited by bathophenanthroline, mersalyl, p-hydroxymercuribenzoate, bromcresol purple, tannic acid, pyridoxal 5'-phosphate and p-hydroxymercuribenzoate. Functionally, electroneutral antiporter that mediates the transport of adenine nucleotides through the inner mitochondrial membrane. Originally identified as an ATP-magnesium/inorganic phosphate antiporter, it also acts as a broad specificity adenyl nucleotide antiporter. By regulating the mitochondrial matrix adenine nucleotide pool could adapt to changing cellular energetic demands and indirectly regulate adenine nucleotide-dependent metabolic pathways. Also acts as a regulator of mitochondrial calcium uptake and can probably transport trace amounts of other divalent metal cations in complex with ATP. In vitro, a low activity is also observed with guanyl and pyrimidine nucleotides. This chain is Mitochondrial adenyl nucleotide antiporter SLC25A23, found in Homo sapiens (Human).